Consider the following 1976-residue polypeptide: Myosin-10 (1976 aa).

Omega-N-methylarginine is present on Arg-18. Residues 31–81 (TAKKLVWIPSERHGFEAASIKEERGDEVMVELAENGKKAMVNKDDIQKMNP) enclose the Myosin N-terminal SH3-like domain. A Myosin motor domain is found at 85-783 (SKVEDMAELT…VLAHLEEERD (699 aa)). 178–185 (GESGAGKT) contacts ATP. N6-acetyllysine is present on Lys-442. The segment at 661-683 (LTKLMATLRNTNPNFVRCIIPNH) is actin-binding. Positions 786–815 (ITDIIIFFQAVCRGYLARKAFAKKQQQLSA) constitute an IQ domain. The stretch at 845–1976 (LQVTRQEEEL…VNETQPPQSE (1132 aa)) forms a coiled coil. The interval 1125–1175 (EDFESEKASRNKAEKQKRDLSEELEALKTELEDTLDTTAAQQELRTKREQE) is disordered. Over residues 1129–1155 (SEKASRNKAEKQKRDLSEELEALKTEL) the composition is skewed to basic and acidic residues. The residue at position 1145 (Ser-1145) is a Phosphoserine. N6-acetyllysine occurs at positions 1241, 1301, and 1645. Disordered regions lie at residues 1697 to 1718 (ASSE…DEIA) and 1874 to 1976 (KANA…PQSE). Residues 1698-1708 (SSERARRHAEQ) show a composition bias toward basic and acidic residues. Arg-1930 is subject to Omega-N-methylarginine. Residues Ser-1935, Ser-1937, Ser-1938, and Ser-1939 each carry the phosphoserine modification. Arg-1940 bears the Omega-N-methylarginine mark. Phosphoserine is present on residues Ser-1952 and Ser-1956. A Phosphothreonine modification is found at Thr-1960. Positions 1967–1976 (VNETQPPQSE) are enriched in polar residues. Ser-1975 carries the post-translational modification Phosphoserine.

The protein belongs to the TRAFAC class myosin-kinesin ATPase superfamily. Myosin family. In terms of assembly, myosin is a hexameric protein that consists of 2 heavy chain subunits (MHC), 2 alkali light chain subunits (MLC) and 2 regulatory light chain subunits (MLC-2). Interacts with PLEKHG6. Interacts with ECPAS. Interacts with KIF26B. Interacts with LARP6. Interacts with MCC. Interacts with CFAP95. In terms of processing, phosphorylated by ABL2.

It is found in the cell projection. The protein localises to the lamellipodium. Involved with LARP6 in the stabilization of type I collagen mRNAs for CO1A1 and CO1A2. During cell spreading, plays an important role in cytoskeleton reorganization, focal contacts formation (in the central part but not the margins of spreading cells), and lamellipodial extension; this function is mechanically antagonized by MYH9. Cellular myosin that appears to play a role in cytokinesis, cell shape, and specialized functions such as secretion and capping. This Rattus norvegicus (Rat) protein is Myosin-10 (Myh10).